A 134-amino-acid polypeptide reads, in one-letter code: Sec-independent protein translocase protein TatB (134 aa).

Residues 2–22 (FDGIGFMELLLIGILGLVVLG) form a helical membrane-spanning segment. Residues 90–134 (AESVNRPYKVEDTSPVAPKASPDESPSVVEAKSSEATSENSSTPK) form a disordered region. The segment covering 123-134 (SEATSENSSTPK) has biased composition (polar residues).

This sequence belongs to the TatB family. The Tat system comprises two distinct complexes: a TatABC complex, containing multiple copies of TatA, TatB and TatC subunits, and a separate TatA complex, containing only TatA subunits. Substrates initially bind to the TatABC complex, which probably triggers association of the separate TatA complex to form the active translocon.

It localises to the cell inner membrane. Its function is as follows. Part of the twin-arginine translocation (Tat) system that transports large folded proteins containing a characteristic twin-arginine motif in their signal peptide across membranes. Together with TatC, TatB is part of a receptor directly interacting with Tat signal peptides. TatB may form an oligomeric binding site that transiently accommodates folded Tat precursor proteins before their translocation. This is Sec-independent protein translocase protein TatB from Shewanella frigidimarina (strain NCIMB 400).